The following is a 216-amino-acid chain: Probable GTP-binding protein EngB (216 aa).

An EngB-type G domain is found at 27–201 (EGIEVAFAGR…REKLDTWFSE (175 aa)). Residues 35–42 (GRSNAGKS), 62–66 (GRTQL), 80–83 (DLPG), 147–150 (TKAD), and 180–182 (FSS) each bind GTP. Mg(2+) is bound by residues serine 42 and threonine 64.

This sequence belongs to the TRAFAC class TrmE-Era-EngA-EngB-Septin-like GTPase superfamily. EngB GTPase family. Mg(2+) serves as cofactor.

In terms of biological role, necessary for normal cell division and for the maintenance of normal septation. This chain is Probable GTP-binding protein EngB, found in Yersinia pseudotuberculosis serotype O:1b (strain IP 31758).